The chain runs to 440 residues: Endoglucanase B (440 aa).

The N-terminal stretch at 1-33 is a signal peptide; sequence MNKRLSRGKISLLASVFVTTTFMGGVNVLASTA. Catalysis depends on Glu-179, which acts as the Proton donor. Catalysis depends on Glu-305, which acts as the Nucleophile. The Dockerin domain maps to 381 to 440; it reads TSYSLGDVNKDGKVNAIDYAVLKSILLGTNTNVDLSVSDMNKDGKVNALDLAVLKKMLLS.

This sequence belongs to the glycosyl hydrolase 5 (cellulase A) family.

The enzyme catalyses Endohydrolysis of (1-&gt;4)-beta-D-glucosidic linkages in cellulose, lichenin and cereal beta-D-glucans.. The catalysed reaction is Endohydrolysis of (1-&gt;4)-beta-D-xylosidic linkages in xylans.. Functionally, has endoglucanase activity on carboxymethyl-cellulose (CMC), xylan and lichenan, but not Avicel. The sequence is that of Endoglucanase B (engB) from Clostridium cellulovorans (strain ATCC 35296 / DSM 3052 / OCM 3 / 743B).